We begin with the raw amino-acid sequence, 192 residues long: Peptidyl-prolyl cis-trans isomerase 1 (192 aa).

A PPIase cyclophilin-type domain is found at Phe-25–Glu-188.

This sequence belongs to the cyclophilin-type PPIase family.

The enzyme catalyses [protein]-peptidylproline (omega=180) = [protein]-peptidylproline (omega=0). In terms of biological role, PPIases accelerate the folding of proteins. It catalyzes the cis-trans isomerization of proline imidic peptide bonds in oligopeptides. The sequence is that of Peptidyl-prolyl cis-trans isomerase 1 (cyn-1) from Caenorhabditis elegans.